Here is a 169-residue protein sequence, read N- to C-terminus: Heat shock protein beta-7 (169 aa).

Positions 1 to 37 (MSHRTSSAFRAERSFRSSSSSSSSSSSSASRALPAQD) are disordered. The interval 1–70 (MSHRTSSAFR…PLAFPARPGG (70 aa)) is required for localization to SC35 splicing speckles. Positions 16 to 32 (RSSSSSSSSSSSSASRA) are enriched in low complexity. One can recognise a sHSP domain in the interval 61-169 (PLAFPARPGG…QQTFRTEIKI (109 aa)).

It belongs to the small heat shock protein (HSP20) family. As to quaternary structure, interacts with C-terminal domain of actin-binding protein 280. As to expression, found in both cardiac and slow skeletal (soleus) muscle.

It is found in the cytoplasm. It localises to the nucleus. The protein resides in the cajal body. The sequence is that of Heat shock protein beta-7 (Hspb7) from Mus musculus (Mouse).